Here is a 149-residue protein sequence, read N- to C-terminus: 16.9 kDa class I heat shock protein 3 (149 aa).

The region spanning 35–149 is the sHSP domain; that stretch reads DTAAFANARV…PEVKAIEISG (115 aa).

It belongs to the small heat shock protein (HSP20) family. May form oligomeric structures.

Its subcellular location is the cytoplasm. The polypeptide is 16.9 kDa class I heat shock protein 3 (HSP16.9C) (Oryza sativa subsp. japonica (Rice)).